The following is a 379-amino-acid chain: Queuine tRNA-ribosyltransferase (379 aa).

Catalysis depends on D95, which acts as the Proton acceptor. Residues D95–F99, D149, Q197, and G224 contribute to the substrate site. The interval G255 to E261 is RNA binding. D274 acts as the Nucleophile in catalysis. Residues C312, C314, C317, and H343 each contribute to the Zn(2+) site.

It belongs to the queuine tRNA-ribosyltransferase family. Homodimer. Within each dimer, one monomer is responsible for RNA recognition and catalysis, while the other monomer binds to the replacement base PreQ1. It depends on Zn(2+) as a cofactor.

The catalysed reaction is 7-aminomethyl-7-carbaguanine + guanosine(34) in tRNA = 7-aminomethyl-7-carbaguanosine(34) in tRNA + guanine. Its pathway is tRNA modification; tRNA-queuosine biosynthesis. Catalyzes the base-exchange of a guanine (G) residue with the queuine precursor 7-aminomethyl-7-deazaguanine (PreQ1) at position 34 (anticodon wobble position) in tRNAs with GU(N) anticodons (tRNA-Asp, -Asn, -His and -Tyr). Catalysis occurs through a double-displacement mechanism. The nucleophile active site attacks the C1' of nucleotide 34 to detach the guanine base from the RNA, forming a covalent enzyme-RNA intermediate. The proton acceptor active site deprotonates the incoming PreQ1, allowing a nucleophilic attack on the C1' of the ribose to form the product. After dissociation, two additional enzymatic reactions on the tRNA convert PreQ1 to queuine (Q), resulting in the hypermodified nucleoside queuosine (7-(((4,5-cis-dihydroxy-2-cyclopenten-1-yl)amino)methyl)-7-deazaguanosine). The polypeptide is Queuine tRNA-ribosyltransferase (Solibacter usitatus (strain Ellin6076)).